The chain runs to 425 residues: Glutamate-1-semialdehyde 2,1-aminomutase (425 aa).

Position 264 is an N6-(pyridoxal phosphate)lysine (lysine 264).

This sequence belongs to the class-III pyridoxal-phosphate-dependent aminotransferase family. HemL subfamily. As to quaternary structure, homodimer. The cofactor is pyridoxal 5'-phosphate.

Its subcellular location is the cytoplasm. It catalyses the reaction (S)-4-amino-5-oxopentanoate = 5-aminolevulinate. The protein operates within porphyrin-containing compound metabolism; protoporphyrin-IX biosynthesis; 5-aminolevulinate from L-glutamyl-tRNA(Glu): step 2/2. In Campylobacter lari (strain RM2100 / D67 / ATCC BAA-1060), this protein is Glutamate-1-semialdehyde 2,1-aminomutase.